The following is a 325-amino-acid chain: Biotin synthase (325 aa).

Residues 36–254 (NEVQLAMLLS…IALARIMFPK (219 aa)) enclose the Radical SAM core domain. [4Fe-4S] cluster contacts are provided by Cys51, Cys55, and Cys58. [2Fe-2S] cluster contacts are provided by Cys95, Cys126, Cys186, and Arg258.

This sequence belongs to the radical SAM superfamily. Biotin synthase family. As to quaternary structure, homodimer. It depends on [4Fe-4S] cluster as a cofactor. [2Fe-2S] cluster serves as cofactor.

It carries out the reaction (4R,5S)-dethiobiotin + (sulfur carrier)-SH + 2 reduced [2Fe-2S]-[ferredoxin] + 2 S-adenosyl-L-methionine = (sulfur carrier)-H + biotin + 2 5'-deoxyadenosine + 2 L-methionine + 2 oxidized [2Fe-2S]-[ferredoxin]. Its pathway is cofactor biosynthesis; biotin biosynthesis; biotin from 7,8-diaminononanoate: step 2/2. In terms of biological role, catalyzes the conversion of dethiobiotin (DTB) to biotin by the insertion of a sulfur atom into dethiobiotin via a radical-based mechanism. This Neorickettsia sennetsu (strain ATCC VR-367 / Miyayama) (Ehrlichia sennetsu) protein is Biotin synthase.